A 552-amino-acid chain; its full sequence is Urocanate hydratase (552 aa).

Residues 50-51 (GG), Q128, 174-176 (GMG), E194, R199, 261-265 (QTSAH), 271-272 (YI), and Y320 contribute to the NAD(+) site. Residue C408 is part of the active site. G490 is a binding site for NAD(+).

This sequence belongs to the urocanase family. NAD(+) is required as a cofactor.

It is found in the cytoplasm. It catalyses the reaction 4-imidazolone-5-propanoate = trans-urocanate + H2O. The protein operates within amino-acid degradation; L-histidine degradation into L-glutamate; N-formimidoyl-L-glutamate from L-histidine: step 2/3. Catalyzes the conversion of urocanate to 4-imidazolone-5-propionate. The sequence is that of Urocanate hydratase from Bdellovibrio bacteriovorus (strain ATCC 15356 / DSM 50701 / NCIMB 9529 / HD100).